The chain runs to 387 residues: uncharacterized protein (387 aa).

An N-terminal signal peptide occupies residues 1–27; that stretch reads MKKWMITIAMLILAGIALFVFISPLKS.

This is an uncharacterized protein from Bacillus subtilis (strain 168).